Consider the following 147-residue polypeptide: UPF0208 membrane protein CGSHiEE_06015 (147 aa).

The next 2 helical transmembrane spans lie at 38–58 (FAQK…QIYA) and 67–87 (IAIL…YWLG).

The protein belongs to the UPF0208 family.

Its subcellular location is the cell inner membrane. In Haemophilus influenzae (strain PittEE), this protein is UPF0208 membrane protein CGSHiEE_06015.